The sequence spans 141 residues: Translation initiation factor 2 subunit beta (141 aa).

It belongs to the eIF-2-beta/eIF-5 family. Heterotrimer composed of an alpha, a beta and a gamma chain.

EIF-2 functions in the early steps of protein synthesis by forming a ternary complex with GTP and initiator tRNA. This chain is Translation initiation factor 2 subunit beta, found in Thermofilum pendens (strain DSM 2475 / Hrk 5).